Reading from the N-terminus, the 290-residue chain is ATP synthase gamma chain (290 aa).

It belongs to the ATPase gamma chain family. As to quaternary structure, F-type ATPases have 2 components, CF(1) - the catalytic core - and CF(0) - the membrane proton channel. CF(1) has five subunits: alpha(3), beta(3), gamma(1), delta(1), epsilon(1). CF(0) has three main subunits: a, b and c.

It localises to the cell membrane. In terms of biological role, produces ATP from ADP in the presence of a proton gradient across the membrane. The gamma chain is believed to be important in regulating ATPase activity and the flow of protons through the CF(0) complex. The protein is ATP synthase gamma chain of Roseiflexus castenholzii (strain DSM 13941 / HLO8).